The sequence spans 228 residues: Ribonuclease 3 (228 aa).

An RNase III domain is found at 5–127 (KDALQDRLGY…LFGAIYLDGG (123 aa)). Residue glutamate 40 participates in Mg(2+) binding. Aspartate 44 is a catalytic residue. The Mg(2+) site is built by aspartate 113 and glutamate 116. Glutamate 116 is a catalytic residue. One can recognise a DRBM domain in the interval 154–224 (DPKTRLQEHL…AEQMLKRLED (71 aa)). The tract at residues 200 to 228 (AEGEAGSRRKAEQQAAEQMLKRLEDKHER) is disordered. Basic and acidic residues predominate over residues 218-228 (MLKRLEDKHER).

This sequence belongs to the ribonuclease III family. In terms of assembly, homodimer. Mg(2+) serves as cofactor.

Its subcellular location is the cytoplasm. The enzyme catalyses Endonucleolytic cleavage to 5'-phosphomonoester.. Its function is as follows. Digests double-stranded RNA. Involved in the processing of primary rRNA transcript to yield the immediate precursors to the large and small rRNAs (23S and 16S). Processes some mRNAs, and tRNAs when they are encoded in the rRNA operon. Processes pre-crRNA and tracrRNA of type II CRISPR loci if present in the organism. This chain is Ribonuclease 3, found in Alkalilimnicola ehrlichii (strain ATCC BAA-1101 / DSM 17681 / MLHE-1).